Consider the following 189-residue polypeptide: Apolipophorin-3 (189 aa).

The signal sequence occupies residues 1–18 (MAAKFVVVLAACVALSHS). A propeptide spanning residues 19 to 23 (AMVRR) is cleaved from the precursor.

It belongs to the insect apolipophorin-3 family. In terms of assembly, equilibrium between a soluble monomer and a bound lipoprotein form. Apolipophorin-3 associates with lipophorin during lipid loading until each particle contains 9 or 14 molecules of apolipophorin-3. As to expression, hemolymph.

The protein resides in the secreted. In terms of biological role, assists in the loading of diacylglycerol, generated from triacylglycerol stores in the fat body through the action of adipokinetic hormone, into lipophorin, the hemolymph lipoprotein. It increases the lipid carrying capacity of lipophorin by covering the expanding hydrophobic surface resulting from diacylglycerol uptake. It thus plays a critical role in the transport of lipids during flight in several species of insects. The chain is Apolipophorin-3 from Manduca sexta (Tobacco hawkmoth).